Consider the following 735-residue polypeptide: MGGKSEPAKSESMATKPDLLNTSFFSFKSLKLKTKQQELLLRISILGLVYILAFIARLFSVLRYESMIHEFDPYFNYRTTLFLTEKGFYEFWNWFDSESWYPLGRIIGGTLYPGLMVTAALIYWTLRFLRFFVHIREVCVLTAPFFASNTTLVAYFFGKELWDTGAGLVAAVLIAICPGYISRSVAGSYDNEAVAIFALLLTFYLFVKAVNTGSLAWALASAFGYFYMVSAWGGYVFIINLVPLYVLVLLITGRYSMRLYIAYNCMYILGMLLAMQIRFVGFQHVQSGEHMGAMGVFLLMQVFYFLDWVKYQLNDTKLFQTFLRITVTSAILVGGVAVGVGTASGYISPWTGRFYSLLDPTYAKDHIPIIASVSEHQPTAWSSFMFDYHILLFLFPAGLYFCFKRLTDATIFIVMYGLTSLYFAGVMVRLILVATPAVCLISAIAVSATIKNLTSLLRTKQKVSQTGSTKGAGSSKASSKVTLDQSQPFQKNGAIALLVGVFYLLSRYAIHCTWVTAEAYSSPSIVLAARGAHGNRIIFDDYREAYYWLRQNTATDAKIMSWWDYGYQITAMGNRTVIVDNNTWNNTHIATVGRAMSSYEDDAYDIMRSLDVNYVLVVFGGVTGYSSDDINKFLWMVRIGGGVFPVIKEPDYLVNGEFRVDKGASPKMLNCLMYKLCYYRFGELTTEYGKPPGYDRARGVEIGNKDIKLEHLEEAYTTSNWIVRIYRVKPPTNRL.

The Cytoplasmic segment spans residues 1-38 (MGGKSEPAKSESMATKPDLLNTSFFSFKSLKLKTKQQE). A helical transmembrane segment spans residues 39–59 (LLLRISILGLVYILAFIARLF). The Lumenal segment spans residues 60–142 (SVLRYESMIH…VHIREVCVLT (83 aa)). The DXD motif 1 signature appears at 70–72 (EFD). Aspartate 72 serves as a coordination point for Mn(2+). The chain crosses the membrane as a helical span at residues 143–161 (APFFASNTTLVAYFFGKEL). Topologically, residues 162–163 (WD) are cytoplasmic. A helical transmembrane segment spans residues 164–181 (TGAGLVAAVLIAICPGYI). Residues 182–192 (SRSVAGSYDNE) are Lumenal-facing. Residues aspartate 190 and glutamate 192 each contribute to the Mn(2+) site. A DXD motif 2 motif is present at residues 190–192 (DNE). A helical membrane pass occupies residues 193–212 (AVAIFALLLTFYLFVKAVNT). Topologically, residues 213-214 (GS) are cytoplasmic. A helical transmembrane segment spans residues 215 to 229 (LAWALASAFGYFYMV). Over 230 to 234 (SAWGG) the chain is Lumenal. The helical transmembrane segment at 235 to 251 (YVFIINLVPLYVLVLLI) threads the bilayer. Topologically, residues 252 to 256 (TGRYS) are cytoplasmic. The helical transmembrane segment at 257–282 (MRLYIAYNCMYILGMLLAMQIRFVGF) threads the bilayer. The Lumenal segment spans residues 283–290 (QHVQSGEH). Residues 291-310 (MGAMGVFLLMQVFYFLDWVK) form a helical membrane-spanning segment. Residues 311 to 326 (YQLNDTKLFQTFLRIT) are Cytoplasmic-facing. The chain crosses the membrane as a helical span at residues 327–347 (VTSAILVGGVAVGVGTASGYI). The Lumenal segment spans residues 348–380 (SPWTGRFYSLLDPTYAKDHIPIIASVSEHQPTA). The SVSE motif signature appears at 372-375 (SVSE). A helical transmembrane segment spans residues 381–403 (WSSFMFDYHILLFLFPAGLYFCF). Over 404–409 (KRLTDA) the chain is Cytoplasmic. A helical transmembrane segment spans residues 410–426 (TIFIVMYGLTSLYFAGV). Residues 427–430 (MVRL) are Lumenal-facing. Arginine 429 lines the dolichyl diphosphooligosaccharide pocket. Residues 431–452 (ILVATPAVCLISAIAVSATIKN) form a helical membrane-spanning segment. Over 453–494 (LTSLLRTKQKVSQTGSTKGAGSSKASSKVTLDQSQPFQKNGA) the chain is Cytoplasmic. Residues 495–515 (IALLVGVFYLLSRYAIHCTWV) traverse the membrane as a helical segment. The Lumenal portion of the chain corresponds to 516-735 (TAEAYSSPSI…YRVKPPTNRL (220 aa)). The tract at residues 562 to 564 (WWD) is interacts with target acceptor peptide in protein substrate. The WWDYG motif motif lies at 562–566 (WWDYG). Tyrosine 567 contributes to the dolichyl diphosphooligosaccharide binding site. N-linked (GlcNAc...) asparagine glycosylation is found at asparagine 574 and asparagine 581. N-linked (GlcNAc...) (high mannose) asparagine glycosylation occurs at asparagine 585. Positions 629 to 636 (DINKFLWM) match the DK motif motif.

This sequence belongs to the STT3 family. Component of the oligosaccharyltransferase (OST) complex. The cofactor is Mg(2+). It depends on Mn(2+) as a cofactor. As to expression, expressed preferentially in the root but also in the shoot.

It localises to the endoplasmic reticulum membrane. The catalysed reaction is a di-trans,poly-cis-dolichyl diphosphooligosaccharide + L-asparaginyl-[protein] = N(4)-(oligosaccharide-(1-&gt;4)-N-acetyl-beta-D-glucosaminyl-(1-&gt;4)-N-acetyl-beta-D-glucosaminyl)-L-asparaginyl-[protein] + a di-trans,poly-cis-dolichyl diphosphate + H(+). It functions in the pathway protein modification; protein glycosylation. In terms of biological role, catalytic subunit of the oligosaccharyl transferase (OST) complex that catalyzes the initial transfer of a defined glycan (Glc(3)Man(9)GlcNAc(2) in eukaryotes) from the lipid carrier dolichol-pyrophosphate to an asparagine residue within an Asn-X-Ser/Thr consensus motif in nascent polypeptide chains, the first step in protein N-glycosylation. N-glycosylation occurs cotranslationally and the complex associates with the Sec61 complex at the channel-forming translocon complex that mediates protein translocation across the endoplasmic reticulum (ER). All subunits are required for a maximal enzyme activity. This subunit contains the active site and the acceptor peptide and donor lipid-linked oligosaccharide (LLO) binding pockets. The sequence is that of Dolichyl-diphosphooligosaccharide--protein glycosyltransferase subunit STT3B (STT3B) from Arabidopsis thaliana (Mouse-ear cress).